The sequence spans 226 residues: Uridylate kinase (226 aa).

ATP is bound at residue 9–10 (GS). A UMP-binding site is contributed by Gly-46. ATP-binding residues include Gly-47 and Arg-51. Residues Asp-68 and 116-122 (THPGHTT) each bind UMP. Residues Thr-142, Asn-143, Tyr-148, and Asp-151 each contribute to the ATP site.

This sequence belongs to the UMP kinase family. Homohexamer.

The protein resides in the cytoplasm. It carries out the reaction UMP + ATP = UDP + ADP. It participates in pyrimidine metabolism; CTP biosynthesis via de novo pathway; UDP from UMP (UMPK route): step 1/1. Inhibited by UTP. Catalyzes the reversible phosphorylation of UMP to UDP. This Methanocaldococcus jannaschii (strain ATCC 43067 / DSM 2661 / JAL-1 / JCM 10045 / NBRC 100440) (Methanococcus jannaschii) protein is Uridylate kinase.